The sequence spans 668 residues: DNA ligase (668 aa).

NAD(+) contacts are provided by residues 32 to 36, 81 to 82, and Glu113; these read DAEYD and SL. Lys115 functions as the N6-AMP-lysine intermediate in the catalytic mechanism. NAD(+) is bound by residues Arg136, Glu173, Lys289, and Lys313. Zn(2+) is bound by residues Cys407, Cys410, Cys425, and Cys431. Residues 590–668 enclose the BRCT domain; that stretch reads ASEQPFAGKT…EEELQQALQG (79 aa).

This sequence belongs to the NAD-dependent DNA ligase family. LigA subfamily. Mg(2+) serves as cofactor. Requires Mn(2+) as cofactor.

It catalyses the reaction NAD(+) + (deoxyribonucleotide)n-3'-hydroxyl + 5'-phospho-(deoxyribonucleotide)m = (deoxyribonucleotide)n+m + AMP + beta-nicotinamide D-nucleotide.. In terms of biological role, DNA ligase that catalyzes the formation of phosphodiester linkages between 5'-phosphoryl and 3'-hydroxyl groups in double-stranded DNA using NAD as a coenzyme and as the energy source for the reaction. It is essential for DNA replication and repair of damaged DNA. The sequence is that of DNA ligase from Aeromonas hydrophila subsp. hydrophila (strain ATCC 7966 / DSM 30187 / BCRC 13018 / CCUG 14551 / JCM 1027 / KCTC 2358 / NCIMB 9240 / NCTC 8049).